The primary structure comprises 211 residues: Protein-L-isoaspartate O-methyltransferase 2 (211 aa).

Ser60 is a catalytic residue.

It belongs to the methyltransferase superfamily. L-isoaspartyl/D-aspartyl protein methyltransferase family.

The protein resides in the cytoplasm. It carries out the reaction [protein]-L-isoaspartate + S-adenosyl-L-methionine = [protein]-L-isoaspartate alpha-methyl ester + S-adenosyl-L-homocysteine. In terms of biological role, catalyzes the methyl esterification of L-isoaspartyl residues in peptides and proteins that result from spontaneous decomposition of normal L-aspartyl and L-asparaginyl residues. It plays a role in the repair and/or degradation of damaged proteins. This chain is Protein-L-isoaspartate O-methyltransferase 2, found in Nitrosospira multiformis (strain ATCC 25196 / NCIMB 11849 / C 71).